We begin with the raw amino-acid sequence, 328 residues long: CCAAT/enhancer-binding protein beta (328 aa).

At R3 the chain carries Asymmetric dimethylarginine; by CARM1. K39 carries the N6-methylated lysine modification. Residues 165-274 form a disordered region; it reads DSCKGPRKEE…NIAVRKSRDK (110 aa). The span at 200 to 231 shows a compositional bias: low complexity; that stretch reads SVPSGSSGNLSTSSSSSPPGTPNPSESSKSAA. T220 is modified (phosphothreonine; by RPS6KA1, CDK2 and MAPK). The span at 248–264 shows a compositional bias: basic and acidic residues; it reads KCVDKHSDEYKLRRERN. A bZIP domain is found at 254–317; it reads SDEYKLRRER…STLRNLFKQL (64 aa). Residues 258 to 278 form a basic motif region; sequence KLRRERNNIAVRKSRDKAKMR. The tract at residues 280 to 287 is leucine-zipper; the sequence is LETQHKVL.

The protein belongs to the bZIP family. C/EBP subfamily. As to quaternary structure, binds DNA as a dimer. Interacts (not methylated) with MED23, MED26, SMARCA2, SMARCB1 and SMARCC1. Post-translationally, methylated. Methylation at Arg-3 by CARM1 and at Lys-39 by EHMT2, inhibit transactivation activity. Methylation is probably inhibited by phosphorylation at Thr-220. Specifically expressed in myelomoncytic cells.

The protein resides in the nucleus. In terms of biological role, important transcriptional activator regulating the expression of genes involved in immune and inflammatory responses. Binds to regulatory regions of several acute-phase and cytokines genes and probably plays a role in the regulation of acute-phase reaction, inflammation and hemopoiesis. The consensus recognition site is 5'-T[TG]NNGNAA[TG]-3'. Functions in brown adipose tissue (BAT) differentiation. Regulates the transcriptional induction of peroxisome proliferator-activated receptor gamma (PPARG). Binds to the MGF and MIM-1 promoters and activates the transcription of these genes. Important transcription factor regulating the expression of genes involved in immune and inflammatory responses. Also plays a significant role in adipogenesis, as well as in the gluconeogenic pathway, liver regeneration, and hematopoiesis. The consensus recognition site is 5'-T[TG]NNGNAA[TG]-3'. Its functional capacity is governed by protein interactions and post-translational protein modifications. In Gallus gallus (Chicken), this protein is CCAAT/enhancer-binding protein beta (CEBPB).